A 64-amino-acid polypeptide reads, in one-letter code: Large ribosomal subunit protein bL35 (64 aa).

Over residues 1–26 (MPKIKTHRGAAKRFKKTGTGKIKRSK) the composition is skewed to basic residues. A disordered region spans residues 1-48 (MPKIKTHRGAAKRFKKTGTGKIKRSKAYASHLLGGKSPKRKRNLRKAG).

Belongs to the bacterial ribosomal protein bL35 family.

The chain is Large ribosomal subunit protein bL35 from Syntrophomonas wolfei subsp. wolfei (strain DSM 2245B / Goettingen).